The following is a 629-amino-acid chain: Hemocyanin F chain (629 aa).

6 residues coordinate Cu cation: H172, H176, H203, H324, H328, and H364. N-linked (GlcNAc...) asparagine glycosylation is found at N395 and N447. Polar residues predominate over residues 503–513 (SESSVTVSHTP). A disordered region spans residues 503-522 (SESSVTVSHTPTFEELQRGE). Residue N527 is glycosylated (N-linked (GlcNAc...) asparagine). A disulfide bridge links C534 with C582. N-linked (GlcNAc...) asparagine glycosylation occurs at N615.

The protein belongs to the tyrosinase family. Hemocyanin subfamily. As to quaternary structure, tarantula hemocyanin is a 24-chain polymer with seven different chains identified. As to expression, hemolymph.

The protein localises to the secreted. The protein resides in the extracellular space. Its function is as follows. Hemocyanins are copper-containing oxygen carriers occurring freely dissolved in the hemolymph of many mollusks and arthropods. The chain is Hemocyanin F chain (HCF) from Aphonopelma sp. (American tarantula).